The sequence spans 192 residues: Adenine phosphoribosyltransferase (192 aa).

The protein belongs to the purine/pyrimidine phosphoribosyltransferase family. As to quaternary structure, homodimer.

The protein resides in the cytoplasm. It catalyses the reaction AMP + diphosphate = 5-phospho-alpha-D-ribose 1-diphosphate + adenine. The protein operates within purine metabolism; AMP biosynthesis via salvage pathway; AMP from adenine: step 1/1. In terms of biological role, catalyzes a salvage reaction resulting in the formation of AMP, that is energically less costly than de novo synthesis. The sequence is that of Adenine phosphoribosyltransferase from Corynebacterium efficiens (strain DSM 44549 / YS-314 / AJ 12310 / JCM 11189 / NBRC 100395).